A 235-amino-acid chain; its full sequence is Ferrous iron permease EfeU (235 aa).

The Periplasmic segment spans residues 1 to 28 (MTSRSRQAAYSGIFINETTGEFPQKEQE). A helical transmembrane segment spans residues 29–49 (LFEGIVAVIAVVILTWMVFWM). The Cytoplasmic portion of the chain corresponds to 50-77 (RKVSRNVKVQLEQAVDSALQRGNHHGWA). The helical transmembrane segment at 78–98 (LVMMVFFAVAREGLESVFFLL) threads the bilayer. At 99–106 (AAFQQDVG) the chain is on the periplasmic side. The chain crosses the membrane as a helical span at residues 107–127 (IWPPLGAMLGLATAVVLGFLL). The Cytoplasmic segment spans residues 128-138 (YWGGIRLNLGA). A helical transmembrane segment spans residues 139-159 (FFKWTSLFILFVAAGLAAGAI). Over 160–177 (RAFHEAGLWNHFQEIAFD) the chain is Periplasmic. Residues 178–198 (MSAVLSTHSLFGTLMEGIFGY) form a helical membrane-spanning segment. Residues 199–203 (QEAPS) lie on the Cytoplasmic side of the membrane. Residues 204-224 (VSEVAVWFIYLIPALVAFALP) traverse the membrane as a helical segment. At 225-235 (PRAGATASRSA) the chain is on the periplasmic side.

It belongs to the oxidase-dependent Fe transporter (OFeT) (TC 9.A.10.1) family. As to quaternary structure, part of a ferrous iron transporter composed of EfeU, EfeO and EfeB.

It is found in the cell inner membrane. Its function is as follows. Uptake of Fe(2+) ions across the membrane. This Shigella flexneri protein is Ferrous iron permease EfeU (efeU).